The following is a 1824-amino-acid chain: Treslin (1824 aa).

10 disordered regions span residues 542–572 (EFYQSSTAGSSGSLRSKKRGTQCTPVRQKMK), 590–622 (AQKTQGDSGSAGSGKGTEKGGKKSSGDRTKPGL), 907–973 (SPSK…SGES), 1001–1035 (RHSSVFYSSSQPRSRNLDRVVSSSQLSHSEGKGKF), 1098–1117 (AVGCRTPQSPRTPNRTVGDN), 1189–1221 (VPENQVNVPDSPVFAKRHSPRLVTPGKNSSPEE), 1293–1388 (PFCN…DDDK), 1459–1518 (FEGK…QSSP), 1617–1650 (TPTHHPTSSQSPLASPLTPSPQSRGWPTPENLNS), and 1803–1824 (PLCQPRRRRTPSRTYSRKKLLD). The segment covering 546 to 555 (SSTAGSSGSL) has biased composition (low complexity). The segment covering 562-572 (TQCTPVRQKMK) has biased composition (polar residues). The segment covering 605–619 (GTEKGGKKSSGDRTK) has biased composition (basic and acidic residues). The segment covering 907–921 (SPSKKSKMPRSQSVS) has biased composition (polar residues). Residues 932–952 (SDVDNDDRHTLLTKKVSETPL) are compositionally biased toward basic and acidic residues. Polar residues-rich tracts occupy residues 1005-1014 (VFYSSSQPRS) and 1103-1114 (TPQSPRTPNRTV). Over residues 1319–1345 (RSGNTPVKESCSPSSNSQGITGTSPSP) the composition is skewed to polar residues. Low complexity predominate over residues 1347–1370 (KSLSSAVAKSSPSPSFGPSRSGVG). Polar residues predominate over residues 1462 to 1472 (KQTTSTGTPLT). The segment covering 1480–1490 (TPDRRQREAEA) has biased composition (basic and acidic residues). Polar residues-rich tracts occupy residues 1617–1629 (TPTHHPTSSQSPL) and 1636–1650 (SPQSRGWPTPENLNS). A compositionally biased stretch (basic residues) spans 1807 to 1824 (PRRRRTPSRTYSRKKLLD).

This sequence belongs to the treslin family. Interacts with topbp1 (via BRCT domains); interaction takes place in a cdk2-dependent manner. Component of the replisome complex.

Its subcellular location is the nucleus. Its function is as follows. Regulator of DNA replication and S/M and G2/M checkpoints. Regulates the triggering of DNA replication initiation via its interaction with topbp1 by participating in cdk2-mediated loading of cdc45l onto replication origins. Required for the transition from pre-replication complex (pre-RC) to pre-initiation complex (pre-IC). Required to prevent mitotic entry after treatment with ionizing radiation. The chain is Treslin (ticrr) from Danio rerio (Zebrafish).